Reading from the N-terminus, the 273-residue chain is uncharacterized protein (273 aa).

The protein belongs to the AtsA family.

This is an uncharacterized protein from Mycobacterium tuberculosis (strain CDC 1551 / Oshkosh).